The sequence spans 370 residues: Protein RKD5 (370 aa).

Residues 193–232 (DSETESEESVNEKTEHSEFENDKTEQSESDAKTEILKKKK) form a disordered region. Over residues 202–228 (VNEKTEHSEFENDKTEQSESDAKTEIL) the composition is skewed to basic and acidic residues. The region spanning 224 to 309 (KTEILKKKKR…AEKQQEKNEA (86 aa)) is the RWP-RK domain. Positions 283 to 328 (HRKIKSLDCLIHDLQREAEKQQEKNEAAAMAVAKKQEKLETEKRNI) form a coiled coil. A disordered region spans residues 347–370 (NFKKRHRASRAKKNQESLVTSSST). The segment covering 349 to 358 (KKRHRASRAK) has biased composition (basic residues).

It is found in the nucleus. Its function is as follows. Putative transcription factor. This Arabidopsis thaliana (Mouse-ear cress) protein is Protein RKD5 (RKD5).